A 155-amino-acid polypeptide reads, in one-letter code: Small ribosomal subunit protein uS7c (155 aa).

Belongs to the universal ribosomal protein uS7 family. Part of the 30S ribosomal subunit.

The protein resides in the plastid. It is found in the chloroplast. In terms of biological role, one of the primary rRNA binding proteins, it binds directly to 16S rRNA where it nucleates assembly of the head domain of the 30S subunit. The sequence is that of Small ribosomal subunit protein uS7c (rps7) from Stewartia pseudocamellia (Japanese stewartia).